A 253-amino-acid polypeptide reads, in one-letter code: uncharacterized protein (253 aa).

Position 6–30 (6–30) interacts with NADP(+); that stretch reads IITASDSGIGKECALLLAQQGFDIG. Serine 140 contacts substrate. Tyrosine 153 functions as the Proton acceptor in the catalytic mechanism.

This sequence belongs to the short-chain dehydrogenases/reductases (SDR) family.

This is an uncharacterized protein from Escherichia coli (strain K12).